The primary structure comprises 496 residues: Solute carrier family 2, facilitated glucose transporter member 3 (496 aa).

At 1–11 (MADKKKITASL) the chain is on the cytoplasmic side. A helical membrane pass occupies residues 12–33 (IYAVSVAAIGSLQFGYNTGVIN). The Extracellular portion of the chain corresponds to 34-65 (APEKIIQAFYNRTLSQRSGETISPELLTSLWS). An N-linked (GlcNAc...) asparagine glycan is attached at Asn-44. A helical membrane pass occupies residues 66–86 (LSVAIFSVGGMIGSFSVSLFF). At 87-91 (NRFGR) the chain is on the cytoplasmic side. The chain crosses the membrane as a helical span at residues 92–112 (RNSMLLVNVLAFAGGALMALS). The Extracellular segment spans residues 113 to 119 (KIAKAVE). A helical transmembrane segment spans residues 120–143 (MLIIGRFIIGLFCGLCTGFVPMYI). Over 144 to 154 (SEVSPTSLRGA) the chain is Cytoplasmic. The chain crosses the membrane as a helical span at residues 155 to 175 (FGTLNQLGIVVGILVAQIFGL). Gln-160 provides a ligand contact to D-glucose. Residues 176–184 (EGIMGTEAL) lie on the Extracellular side of the membrane. The helical transmembrane segment at 185-205 (WPLLLGFTIVPAVLQCVALLF) threads the bilayer. Residues 206 to 270 (CPESPRFLLI…LFRSPNYRQP (65 aa)) are Cytoplasmic-facing. Residues 271–291 (IIISITLQLSQQLSGINAVFY) traverse the membrane as a helical segment. The important for selectivity against fructose stretch occupies residues 278–280 (QLS). D-glucose contacts are provided by residues 281–282 (QQ) and Asn-287. Over 292–305 (YSTGIFERAGITQP) the chain is Extracellular. Residues 306–326 (VYATIGAGVVNTVFTVVSLFL) traverse the membrane as a helical segment. D-glucose is bound at residue Asn-316. Residues 327-332 (VERAGR) are Cytoplasmic-facing. A helical membrane pass occupies residues 333 to 353 (RTLHLVGLGGMAVCAAVMTIA). Over 354 to 362 (LALKEKWIR) the chain is Extracellular. The chain crosses the membrane as a helical span at residues 363-388 (YISIVATFGFVALFEIGPGPIPWFIV). D-glucose-binding residues include Glu-377 and Trp-385. Over 389 to 398 (AELFSQGPRP) the chain is Cytoplasmic. A helical transmembrane segment spans residues 399–419 (AAMAVAGCSNWTSNFLVGMLF). Topologically, residues 420 to 428 (PYAEKLCGP) are extracellular. The chain crosses the membrane as a helical span at residues 429–449 (YVFLIFLVFLLIFFIFTYFKV). The Cytoplasmic segment spans residues 450–496 (PETKGRTFEDISRGFEEQVETSSPSSPPIEKNPMVEMNSIEPDKEVA). Residues 464-496 (FEEQVETSSPSSPPIEKNPMVEMNSIEPDKEVA) are disordered.

Belongs to the major facilitator superfamily. Sugar transporter (TC 2.A.1.1) family. Glucose transporter subfamily.

Its subcellular location is the cell membrane. It localises to the perikaryon. The protein resides in the cell projection. It catalyses the reaction D-glucose(out) = D-glucose(in). The enzyme catalyses D-galactose(in) = D-galactose(out). Deoxyglucose transport is inhibited by D-glucose, D-galactose and maltose. Galactose transport is inhibited by D-glucose and maltose. Functionally, facilitative glucose transporter. Can also mediate the uptake of various other monosaccharides across the cell membrane. Mediates the uptake of glucose, 2-deoxyglucose, galactose, mannose, xylose and fucose, and probably also dehydroascorbate. Does not mediate fructose transport. Required for mesendoderm differentiation. The protein is Solute carrier family 2, facilitated glucose transporter member 3 of Gallus gallus (Chicken).